The sequence spans 443 residues: Glucose-6-phosphate isomerase (443 aa).

Catalysis depends on Glu-285, which acts as the Proton donor. Active-site residues include His-306 and Lys-420.

It belongs to the GPI family.

It is found in the cytoplasm. The catalysed reaction is alpha-D-glucose 6-phosphate = beta-D-fructose 6-phosphate. Its pathway is carbohydrate biosynthesis; gluconeogenesis. It participates in carbohydrate degradation; glycolysis; D-glyceraldehyde 3-phosphate and glycerone phosphate from D-glucose: step 2/4. Its function is as follows. Catalyzes the reversible isomerization of glucose-6-phosphate to fructose-6-phosphate. The protein is Glucose-6-phosphate isomerase of Staphylococcus aureus (strain USA300).